The chain runs to 189 residues: HTH-type transcriptional regulator Hpr (189 aa).

The HTH marR-type domain maps to 12–156; that stretch reads ALLYSHKIVQ…ISAIVRRLYG (145 aa). Positions 62–85 form a DNA-binding region, H-T-H motif; it reads ISEIAKYGVMHVSTAFNFSKKLED.

Homodimer.

Its function is as follows. Negative regulator of protease production and sporulation. The protein is HTH-type transcriptional regulator Hpr of Exiguobacterium sibiricum (strain DSM 17290 / CCUG 55495 / CIP 109462 / JCM 13490 / 255-15).